The following is a 381-amino-acid chain: Chaperone protein DnaJ (381 aa).

Residues 5–69 form the J domain; it reads DYYEVLGVSK…EKRARYDRFG (65 aa). Residues 136-218 form a CR-type zinc finger; that stretch reads GKETEIEVPH…CGGTGHVKKR (83 aa). Positions 149, 152, 166, 169, 192, 195, 206, and 209 each coordinate Zn(2+). 4 CXXCXGXG motif repeats span residues 149–156, 166–173, 192–199, and 206–213; these read CDTCHGSG, CPHCHGSG, CPVCGGTG, and CPTCGGTG. Positions 154-174 are disordered; it reads GSGAKPGTSPQSCPHCHGSGQ.

Belongs to the DnaJ family. As to quaternary structure, homodimer. Zn(2+) is required as a cofactor.

The protein localises to the cytoplasm. In terms of biological role, participates actively in the response to hyperosmotic and heat shock by preventing the aggregation of stress-denatured proteins and by disaggregating proteins, also in an autonomous, DnaK-independent fashion. Unfolded proteins bind initially to DnaJ; upon interaction with the DnaJ-bound protein, DnaK hydrolyzes its bound ATP, resulting in the formation of a stable complex. GrpE releases ADP from DnaK; ATP binding to DnaK triggers the release of the substrate protein, thus completing the reaction cycle. Several rounds of ATP-dependent interactions between DnaJ, DnaK and GrpE are required for fully efficient folding. Also involved, together with DnaK and GrpE, in the DNA replication of plasmids through activation of initiation proteins. This chain is Chaperone protein DnaJ, found in Geobacillus thermodenitrificans (strain NG80-2).